An 89-amino-acid chain; its full sequence is Small ribosomal subunit protein uS15 (89 aa).

Belongs to the universal ribosomal protein uS15 family. Part of the 30S ribosomal subunit. Forms a bridge to the 50S subunit in the 70S ribosome, contacting the 23S rRNA.

Its function is as follows. One of the primary rRNA binding proteins, it binds directly to 16S rRNA where it helps nucleate assembly of the platform of the 30S subunit by binding and bridging several RNA helices of the 16S rRNA. In terms of biological role, forms an intersubunit bridge (bridge B4) with the 23S rRNA of the 50S subunit in the ribosome. This chain is Small ribosomal subunit protein uS15, found in Xanthobacter autotrophicus (strain ATCC BAA-1158 / Py2).